The following is a 290-amino-acid chain: Shikimate dehydrogenase (NADP(+)) (290 aa).

Shikimate is bound by residues 22 to 24 and Thr68; that span reads SLS. Lys72 (proton acceptor) is an active-site residue. Residues Asn93 and Asp108 each coordinate shikimate. NADP(+)-binding positions include 133–137 and Ile228; that span reads GSGGS. Residue Tyr230 participates in shikimate binding. Gly251 contacts NADP(+).

Belongs to the shikimate dehydrogenase family. In terms of assembly, homodimer.

The enzyme catalyses shikimate + NADP(+) = 3-dehydroshikimate + NADPH + H(+). The protein operates within metabolic intermediate biosynthesis; chorismate biosynthesis; chorismate from D-erythrose 4-phosphate and phosphoenolpyruvate: step 4/7. Functionally, involved in the biosynthesis of the chorismate, which leads to the biosynthesis of aromatic amino acids. Catalyzes the reversible NADPH linked reduction of 3-dehydroshikimate (DHSA) to yield shikimate (SA). The sequence is that of Shikimate dehydrogenase (NADP(+)) from Leptospira borgpetersenii serovar Hardjo-bovis (strain JB197).